Here is a 494-residue protein sequence, read N- to C-terminus: Probable malate:quinone oxidoreductase (494 aa).

It belongs to the MQO family. FAD serves as cofactor.

The catalysed reaction is (S)-malate + a quinone = a quinol + oxaloacetate. Its pathway is carbohydrate metabolism; tricarboxylic acid cycle; oxaloacetate from (S)-malate (quinone route): step 1/1. The polypeptide is Probable malate:quinone oxidoreductase (Kocuria rhizophila (strain ATCC 9341 / DSM 348 / NBRC 103217 / DC2201)).